We begin with the raw amino-acid sequence, 30 residues long: Cyclotide mech-1 (30 aa).

A cross-link (cyclopeptide (Gly-Asp)) is located at residues 1–30 (GVIPCGESCVFIPCINKKKCSCKNKVCYRD). Cystine bridges form between C5–C20, C9–C22, and C14–C27.

This is a cyclic peptide. In terms of processing, contains 3 disulfide bonds.

Functionally, probably participates in a plant defense mechanism (Potential). Binds to and induces leakage in phospholipd membranes, particularly ones containing 1-palmitoyl-2-oleophosphatidylethanolamine (POPE). Not active against Gram-negative bacterium E.coli ATCC 25922 or Gram-positive bacterium S.aureus ATCC 25923 up to a concentration of 64 uM. The sequence is that of Cyclotide mech-1 from Melicytus chathamicus (Chatham Island mahoe).